Here is a 545-residue protein sequence, read N- to C-terminus: Esterase-5B (545 aa).

The signal sequence occupies residues 1–19; sequence MYCEKLILLLGCFWISSSA. Cys84 and Cys103 are oxidised to a cystine. Asn113 carries an N-linked (GlcNAc...) asparagine glycan. Ser207 acts as the Acyl-ester intermediate in catalysis. A disulfide bridge connects residues Cys259 and Cys271. An N-linked (GlcNAc...) asparagine glycan is attached at Asn421. Residue His467 is the Charge relay system of the active site. N-linked (GlcNAc...) asparagine glycosylation occurs at Asn507. An intrachain disulfide couples Cys515 to Cys536.

It belongs to the type-B carboxylesterase/lipase family. In terms of assembly, homodimer.

The protein localises to the secreted. The enzyme catalyses a carboxylic ester + H2O = an alcohol + a carboxylate + H(+). This Drosophila miranda (Fruit fly) protein is Esterase-5B (Est-5B).